The following is an 89-amino-acid chain: Extender of the chronological lifespan protein ecl3 (89 aa).

The protein belongs to the ecl1 family.

It localises to the nucleus. Involved in chronological cell aging. The polypeptide is Extender of the chronological lifespan protein ecl3 (ecl3) (Schizosaccharomyces pombe (strain 972 / ATCC 24843) (Fission yeast)).